We begin with the raw amino-acid sequence, 280 residues long: UDP-3-O-acyl-N-acetylglucosamine deacetylase (280 aa).

The Zn(2+) site is built by His79, His237, and Asp241. The active-site Proton donor is the His264.

Belongs to the LpxC family. Zn(2+) serves as cofactor.

It carries out the reaction a UDP-3-O-[(3R)-3-hydroxyacyl]-N-acetyl-alpha-D-glucosamine + H2O = a UDP-3-O-[(3R)-3-hydroxyacyl]-alpha-D-glucosamine + acetate. It functions in the pathway glycolipid biosynthesis; lipid IV(A) biosynthesis; lipid IV(A) from (3R)-3-hydroxytetradecanoyl-[acyl-carrier-protein] and UDP-N-acetyl-alpha-D-glucosamine: step 2/6. Catalyzes the hydrolysis of UDP-3-O-myristoyl-N-acetylglucosamine to form UDP-3-O-myristoylglucosamine and acetate, the committed step in lipid A biosynthesis. The chain is UDP-3-O-acyl-N-acetylglucosamine deacetylase from Chlamydia felis (strain Fe/C-56) (Chlamydophila felis).